The sequence spans 228 residues: PKHD-type hydroxylase YbiX (228 aa).

A Fe2OG dioxygenase domain is found at 78-177; it reads TLSTPLFNRY…RVASFIWIQS (100 aa). Residues H96, D98, and H158 each coordinate Fe cation. R168 serves as a coordination point for 2-oxoglutarate.

Fe(2+) serves as cofactor. L-ascorbate is required as a cofactor.

In Escherichia coli O157:H7, this protein is PKHD-type hydroxylase YbiX.